Consider the following 469-residue polypeptide: Ribosomal protein uS12 methylthiotransferase RimO (469 aa).

The region spanning 3 to 119 (TRVYMHTLGC…VARIVSDAQA (117 aa)) is the MTTase N-terminal domain. 6 residues coordinate [4Fe-4S] cluster: C12, C48, C82, C154, C158, and C161. Positions 140–370 (SLPSHTAYLK…MAVQQAISRA (231 aa)) constitute a Radical SAM core domain. One can recognise a TRAM domain in the interval 373–441 (QAMIGRRVEV…EYDLVGRVVA (69 aa)). Residues 444-469 (PSRAARPLPAAPRAAPARKGGLNVLR) are disordered. Residues 447-461 (AARPLPAAPRAAPAR) are compositionally biased toward low complexity.

It belongs to the methylthiotransferase family. RimO subfamily. The cofactor is [4Fe-4S] cluster.

It localises to the cytoplasm. The catalysed reaction is L-aspartate(89)-[ribosomal protein uS12]-hydrogen + (sulfur carrier)-SH + AH2 + 2 S-adenosyl-L-methionine = 3-methylsulfanyl-L-aspartate(89)-[ribosomal protein uS12]-hydrogen + (sulfur carrier)-H + 5'-deoxyadenosine + L-methionine + A + S-adenosyl-L-homocysteine + 2 H(+). Its function is as follows. Catalyzes the methylthiolation of an aspartic acid residue of ribosomal protein uS12. This Anaeromyxobacter sp. (strain K) protein is Ribosomal protein uS12 methylthiotransferase RimO.